The chain runs to 84 residues: Cell division topological specificity factor (84 aa).

This sequence belongs to the MinE family.

Its function is as follows. Prevents the cell division inhibition by proteins MinC and MinD at internal division sites while permitting inhibition at polar sites. This ensures cell division at the proper site by restricting the formation of a division septum at the midpoint of the long axis of the cell. This is Cell division topological specificity factor from Burkholderia cenocepacia (strain HI2424).